The primary structure comprises 296 residues: Triplex capsid protein 2 (296 aa).

Belongs to the herpesviridae TRX2 protein family. In terms of assembly, interacts with TRX1 and major capisd protein/MCP.

Its subcellular location is the virion. It localises to the host nucleus. Functionally, structural component of the T=16 icosahedral capsid. The capsid is composed of pentamers and hexamers of major capsid protein/MCP, which are linked together by heterotrimers called triplexes. These triplexes are formed by a single molecule of triplex protein 1/TRX1 and two copies of triplex protein 2/TRX2. Additionally, TRX1 is required for efficient transport of TRX2 to the nucleus, which is the site of capsid assembly. The chain is Triplex capsid protein 2 from Homo sapiens (Human).